Consider the following 127-residue polypeptide: Ribonuclease P protein component 1 (127 aa).

This sequence belongs to the eukaryotic/archaeal RNase P protein component 1 family. As to quaternary structure, consists of a catalytic RNA component and at least 5 protein subunits. Forms a heterodimeric subcomplex with Rnp4. Reconstituted enzyme missing individual protein subunits is suboptimally active, showing each subunit contributes to optimization of activity.

It is found in the cytoplasm. The enzyme catalyses Endonucleolytic cleavage of RNA, removing 5'-extranucleotides from tRNA precursor.. In terms of biological role, part of ribonuclease P (RNase P), a protein complex that generates mature tRNA molecules by cleaving their 5'-ends. Binds RNase P RNA. The chain is Ribonuclease P protein component 1 from Pyrococcus horikoshii (strain ATCC 700860 / DSM 12428 / JCM 9974 / NBRC 100139 / OT-3).